The chain runs to 1151 residues: Sterol regulatory element-binding protein 1 (1151 aa).

Residues 1–59 are transcriptional activation (acidic); the sequence is MDEPPFTEAALEQALAEPCELDAALLTDIEDMLQLINNQDSDFPGLFDAPYAGVAGGTD. Residues 1–487 are Cytoplasmic-facing; it reads MDEPPFTEAA…HGRGMLDRSR (487 aa). The 9aaTAD motif lies at 27 to 35; that stretch reads TDIEDMLQL. Disordered stretches follow at residues 39 to 125 and 164 to 184; these read QDSD…IKEE and GYPS…TSQT. The segment covering 57–69 has biased composition (low complexity); the sequence is GTDPTSPDASSPG. Residues 91 to 105 show a composition bias toward pro residues; the sequence is TPPPPPVSPTQPAPT. S98 and S117 each carry phosphoserine. Over residues 170-184 the composition is skewed to polar residues; the sequence is GSFSSATPPGSTSQT. The segment at 234 to 497 is interaction with LMNA; sequence QQVPVLLQPH…LALCVLVFLC (264 aa). A bHLH domain is found at 324-374; that stretch reads EKRTAHNAIEKRYRSSINDKIIELKDLVVGTEAKLNKSAVLRKAIDYIRFL. S338 and S339 each carry phosphoserine; by SIK1. Residues 374–396 form a leucine-zipper region; that stretch reads LQQSNQKLKQENLSLRTAAHKSK. S397 bears the Phosphoserine; by AMPK mark. The tract at residues 399–479 is disordered; sequence KDLVSCSSGG…KPEQLPAPHG (81 aa). The residue at position 403 (S403) is a Phosphoserine; by SIK1. A compositionally biased stretch (low complexity) spans 431–448; sequence DAGSPSQSSPLSLGSRGS. Residue S457 is modified to Phosphoserine. The helical transmembrane segment at 488–508 threads the bilayer; it reads LALCVLVFLCLSCNPLASLMG. The Lumenal portion of the chain corresponds to 509–547; it reads SWALPGPSDATSAYHGPWRSVLGAEGRDGPGWVLWLLPP. A helical transmembrane segment spans residues 548–568; the sequence is LVWLTNGLLVLLFLALLFVYG. At 569–1151 the chain is on the cytoplasmic side; sequence EPVTRPHSDP…LGGGTTVTSS (583 aa). The tract at residues 987–1006 is disordered; it reads RQKPPPPSQASQGSSSGAQA. Over residues 995–1006 the composition is skewed to low complexity; the sequence is QASQGSSSGAQA. A Phosphoserine modification is found at S1060.

This sequence belongs to the SREBP family. As to quaternary structure, efficient DNA binding of the soluble transcription factor fragment requires dimerization with another bHLH protein. Interacts with CEBPA, the interaction produces a transcriptional synergy. Interacts with LMNA. Forms a tight complex with SCAP, the SCAP-SREBP complex, in the endoplasmic reticulum membrane and the Golgi apparatus. Interacts with PAQR3; the interaction anchors the SCAP-SREBP complex to the Golgi apparatus in low cholesterol conditions. In terms of processing, processed in the Golgi apparatus, releasing the protein from the membrane. At low cholesterol the SCAP-SREBP complex is recruited into COPII vesicles for export from the endoplasmic reticulum. In the Golgi, complex SREBPs are cleaved sequentially by site-1 (MBTPS1, S1P) and site-2 (MBTPS2, S2P) proteases. The first cleavage by site-1 protease occurs within the luminal loop, the second cleavage by site-2 protease occurs within the first transmembrane domain, releasing the transcription factor from the Golgi membrane. Post-translationally, phosphorylated by AMPK, leading to suppress protein processing and nuclear translocation, and repress target gene expression. Phosphorylation at Ser-403 by SIK1 represses activity possibly by inhibiting DNA-binding. SCAP-free SREBF1 is ubiquitinated by the BCR(ARMC5) complex, leading to its degradation. In terms of processing, ubiquitinated; the nuclear form has a rapid turnover and is rapidly ubiquitinated and degraded by the proteasome in the nucleus.

It is found in the endoplasmic reticulum membrane. The protein resides in the golgi apparatus membrane. It localises to the cytoplasmic vesicle. Its subcellular location is the COPII-coated vesicle membrane. The protein localises to the nucleus. Its activity is regulated as follows. Activation by cleavage is down-regulated upon activation of SIRT3-dependent PRKAA1/AMPK-alpha signaling cascade which leads to inhibition of ATP-consuming lipogenesis to restore cellular energy balance. Precursor of the transcription factor form (Processed sterol regulatory element-binding protein 1), which is embedded in the endoplasmic reticulum membrane. Low sterol concentrations promote processing of this form, releasing the transcription factor form that translocates into the nucleus and activates transcription of genes involved in cholesterol biosynthesis and lipid homeostasis. Functionally, key transcription factor that regulates expression of genes involved in cholesterol biosynthesis and lipid homeostasis. Binds to the sterol regulatory element 1 (SRE-1) (5'-ATCACCCCAC-3'). Has dual sequence specificity binding to both an E-box motif (5'-ATCACGTGA-3') and to SRE-1 (5'-ATCACCCCAC-3'). Regulates the promoters of genes involved in cholesterol biosynthesis and the LDL receptor (LDLR) pathway of sterol regulation. This Sus scrofa (Pig) protein is Sterol regulatory element-binding protein 1 (SREBF1).